A 214-amino-acid chain; its full sequence is MSGLFITFEGGEGAGKSTQIALLASHLRNHGFDPVITREPGGSPGAEAIRHVILSGNAETYGPAMEALLFAAARADHVDQLIRPALAEGRIVLCDRFIDSGRAYQGVTGNLDATYMAAIERIAIDGAMPDLTLVLDICAERGLSRAGKRRGSDTADRFEKEDIAVHEARRQAFLEIARQEPARCKVIDADRSQEKIADEIRSVVDTILTEKGLL.

An ATP-binding site is contributed by 10 to 17 (GGEGAGKS).

This sequence belongs to the thymidylate kinase family.

The enzyme catalyses dTMP + ATP = dTDP + ADP. Its function is as follows. Phosphorylation of dTMP to form dTDP in both de novo and salvage pathways of dTTP synthesis. This chain is Thymidylate kinase, found in Brucella canis (strain ATCC 23365 / NCTC 10854 / RM-666).